Reading from the N-terminus, the 768-residue chain is MHAIAGLTGLLAGVSLSYAAPTHENITSDAYFYGQSPAVYPSPEGTGSGAWASAYEKAKAFVANLTPEEKVNLTAGTDADNGCSGNIPAIPRLNFPGLCVSDAGNGLRSTDHVNAWSSGIHTGASWNKDLAQKRGLHMGSEYHKKGVNVLLGPVVGPLGRIAEGGRNWEGFSVDPYHSGLLVYETIRGIQAAGVGTSTKHYIANEQETNRNPESTDGIDVAAVSSNIDDKTMHELYLWPFQDVVRAGSVSIMCSYQRINNSYGCQNSKTLNGLLKTELGFQGYVMTDWGAQHGGIASSNAGLDMVMPSSTLWNSNLTDAIANGTMEASRLDDMATRIIASWYQMNQDAGFPSPGVGMPADVYAPHQAIIGKSSDSRKVLLQSAIEGHVLVKNKNNTLPLKSPEMISVFGYDAKGPDSLGFALEWLSYSPAIQPNHTLIVGGGSGGNSPAYISAPLDALQQQVIEDGSSILWNISAQDPEVDPNTDACLVFINSYATEGYDRAGLVDEGSDELVTNVASKCSNTIVTIHNAGIRLVNNWIDHENVTAVIFAHLPGQDSGRALVELLYGRSNPSGKLPYTVAKSADDYGALLHPKLPEGQYGLFPQDDFSEGVYIDYRAFDKQGIEPQFEFGFGLSYTTFDYSGLNIGQVSDNSTSRYPPSAAIQEGGNPHLWDVILRVSVDITNSGPVAGDEVAQLYVGIPNGPVRQLRGFEKVNIPVGQTVTVEFALGRRDLSTWDVVAQEWLLQSGTYQVYVGRSSRDLPLQGEFTI.

The first 19 residues, 1–19 (MHAIAGLTGLLAGVSLSYA), serve as a signal peptide directing secretion. 3 N-linked (GlcNAc...) asparagine glycosylation sites follow: asparagine 25, asparagine 72, and asparagine 259. Residue aspartate 287 is part of the active site. N-linked (GlcNAc...) asparagine glycans are attached at residues asparagine 315, asparagine 322, asparagine 394, asparagine 434, asparagine 472, asparagine 543, and asparagine 651.

This sequence belongs to the glycosyl hydrolase 3 family.

The protein resides in the secreted. The catalysed reaction is Hydrolysis of terminal, non-reducing beta-D-glucosyl residues with release of beta-D-glucose.. The protein operates within glycan metabolism; cellulose degradation. Beta-glucosidases are one of a number of cellulolytic enzymes involved in the degradation of cellulosic biomass. Catalyzes the last step releasing glucose from the inhibitory cellobiose. This is Probable beta-glucosidase M (bglM) from Aspergillus oryzae (strain ATCC 42149 / RIB 40) (Yellow koji mold).